The primary structure comprises 512 residues: MKSKGSRLSTDCPVEFPKIVSGFAEEVKIRRQSSQGQYAVDSHPPKSPELKHRRQRSSSFVNGKCRNRDLPLLDNKKAQEINTNSHGQDIGIKNLPRQRELLNAKNGIDFTLMVAGQSGLGKTTFINSLFSTSLIDDDIKENKPIIRYKSIVEGDGTHLNFNVIDTPGFGNNMDNAFTWRTMVNYIDEEIRSYIFQEEQPDRTKMVDNRVHCCLYFLRPSNKGIDTLDVVTMKKLAKRVNLIPVIAKSDLLTKEELKNFKTQVREIIRVQDIPVCFFFGDEVLNATQDIFQKYPFSIIASNEYIFNEKGEKVKGRQYKWGAVDIENEKYCDFKILQKTIFDWNLIDLVESTEDYYEKCRSEMLRTRLLKARDCLTTKSVDITEEQRKFLEEEMNFDEIEENKLKNYKCYEIINKTVMDKVATEWDPEFITRQLEAKKKFNELSNREISKFRDWKKSLFMEQENFNQEIEQLNHKLENLQLECQDLEYKLLIGKSSNSHSTDSATLVNVHIKR.

Positions 31 to 68 (RQSSQGQYAVDSHPPKSPELKHRRQRSSSFVNGKCRNR) are disordered. Residues 106-365 (NGIDFTLMVA…EKCRSEMLRT (260 aa)) enclose the Septin-type G domain. Positions 116-123 (GQSGLGKT) are G1 motif. Residues 116–123 (GQSGLGKT), Gly168, 247–255 (KSDLLTKEE), and Arg315 each bind GTP. The G3 motif stretch occupies residues 165 to 168 (DTPG). The G4 motif stretch occupies residues 246–249 (AKSD). Coiled coils occupy residues 376-406 (TKSV…LKNY) and 451-496 (RDWK…KSSN).

It belongs to the TRAFAC class TrmE-Era-EngA-EngB-Septin-like GTPase superfamily. Septin GTPase family. In terms of assembly, interacts with other septin proteins such as SPR28 to form a ring at the bud neck.

The protein resides in the prospore membrane. The protein localises to the bud neck. Its function is as follows. Septins are GTPases involved in cytokinesis that assemble into filaments and form a ring at the cleavage site. May act by recruiting MYO1 and HOF1, a protein involved in septation, to the site of cleavage. Septins are also involved in cell morphogenesis, bud site selection, chitin deposition, cell cycle regulation, cell compartmentalization and spore wall formation. The sequence is that of Sporulation-regulated protein 3 (SPR3) from Saccharomyces cerevisiae (strain ATCC 204508 / S288c) (Baker's yeast).